A 77-amino-acid polypeptide reads, in one-letter code: Conotoxin Ar5.1 a (77 aa).

The first 19 residues, 1 to 19 (MLCLPVFIILLLLASPAAS), serve as a signal peptide directing secretion. Residues 20-44 (NPLETRIQSDLIRAALEDADMKNEK) constitute a propeptide that is removed on maturation.

This sequence belongs to the conotoxin T superfamily. Post-translationally, contains 2 disulfide bonds that can be either 'C1-C3, C2-C4' or 'C1-C4, C2-C3', since these disulfide connectivities have been observed for conotoxins with cysteine framework V (for examples, see AC P0DQQ7 and AC P81755). As to expression, expressed by the venom duct.

The protein localises to the secreted. The chain is Conotoxin Ar5.1 a from Conus arenatus (Sand-dusted cone).